Reading from the N-terminus, the 359-residue chain is Biotin synthase (359 aa).

A disordered region spans residues 1–22 (MQSTPLNFVPNAAKAPVTPGQA). The 228-residue stretch at 58–285 (NAVQLSTLLS…KAMVRLSAGR (228 aa)) folds into the Radical SAM core domain. [4Fe-4S] cluster is bound by residues Cys-73, Cys-77, and Cys-80. [2Fe-2S] cluster-binding residues include Cys-117, Cys-148, Cys-208, and Arg-280.

The protein belongs to the radical SAM superfamily. Biotin synthase family. In terms of assembly, homodimer. The cofactor is [4Fe-4S] cluster. It depends on [2Fe-2S] cluster as a cofactor.

It catalyses the reaction (4R,5S)-dethiobiotin + (sulfur carrier)-SH + 2 reduced [2Fe-2S]-[ferredoxin] + 2 S-adenosyl-L-methionine = (sulfur carrier)-H + biotin + 2 5'-deoxyadenosine + 2 L-methionine + 2 oxidized [2Fe-2S]-[ferredoxin]. It participates in cofactor biosynthesis; biotin biosynthesis; biotin from 7,8-diaminononanoate: step 2/2. Functionally, catalyzes the conversion of dethiobiotin (DTB) to biotin by the insertion of a sulfur atom into dethiobiotin via a radical-based mechanism. The protein is Biotin synthase of Ralstonia pickettii (strain 12J).